The chain runs to 402 residues: Protein kinase US3 homolog (402 aa).

Disordered stretches follow at residues 1–21 (MSSS…KVHD) and 46–88 (FPDS…SPET). The region spanning 102-386 (YNIVSSLSPG…AQDILMLPLF (285 aa)) is the Protein kinase domain. ATP is bound by residues 108-116 (LSPGSEGYI) and lysine 129. Aspartate 218 (proton acceptor) is an active-site residue.

The protein belongs to the protein kinase superfamily. Ser/Thr protein kinase family. Post-translationally, phosphorylated by UL13 homolog; this phosphorylation regulates subsequent phosphorylation of UL31 and UL34 homologs by US3. Autophosphorylated.

The protein resides in the host cytoplasm. The protein localises to the host nucleus. It catalyses the reaction L-seryl-[protein] + ATP = O-phospho-L-seryl-[protein] + ADP + H(+). The enzyme catalyses L-threonyl-[protein] + ATP = O-phospho-L-threonyl-[protein] + ADP + H(+). In terms of biological role, multifunctional serine/threonine kinase that plays a role in several processes including egress of virus particles from the nucleus, modulation of the actin cytoskeleton and inhibition of apoptosis. Phosphorylates UL31 and UL34 homologs, two critical regulators of capsid budding from nucleus to endoplasmic reticulum, thereby facilitating virion egress. Modulates and redistributes host components of the nuclear envelope, including LMNA, emerin/EMD and the nuclear matrix protein MATR3. Phosphorylates envelope glycoprotein B (gB), probably to direct it to the cell surface. Promotes virus intracellular spread by restructuring host cell cytoskeleton. Blocks host apoptosis to extend cell survival and allow efficient viral replication. Promotes viral gene expression by phosphorylating host HDAC2 to reduce viral genome silencing. The sequence is that of Protein kinase US3 homolog (MDV092) from Gallus gallus (Chicken).